The following is a 422-amino-acid chain: Histidine--tRNA ligase (422 aa).

The protein belongs to the class-II aminoacyl-tRNA synthetase family. Homodimer.

Its subcellular location is the cytoplasm. The enzyme catalyses tRNA(His) + L-histidine + ATP = L-histidyl-tRNA(His) + AMP + diphosphate + H(+). The chain is Histidine--tRNA ligase from Vibrio campbellii (strain ATCC BAA-1116).